The sequence spans 688 residues: Eukaryotic translation initiation factor 3 subunit B (688 aa).

The segment at 1-28 is disordered; the sequence is MAKKKGDQYDSDGAEDQDYDEEPVFEDP. Acidic residues predominate over residues 9–25; sequence YDSDGAEDQDYDEEPVF. Positions 57-141 constitute an RRM domain; the sequence is NVIVVDNIPV…HTLLVNLFSD (85 aa). WD repeat units follow at residues 208–246, 247–287, 291–329, 332–367, 440–482, and 527–572; these read RERF…KINK, FAHS…EKRS, DGSS…LLDK, IKVQ…TLLE, EVKE…EPTM, and GDHY…KRVN. Residues 612 to 643 adopt a coiled-coil conformation; it reads DRVRMTRASKELLEKRAKLREQFVEYRAKRVN.

This sequence belongs to the eIF-3 subunit B family. As to quaternary structure, component of the eukaryotic translation initiation factor 3 (eIF-3) complex.

The protein resides in the cytoplasm. RNA-binding component of the eukaryotic translation initiation factor 3 (eIF-3) complex, which is involved in protein synthesis of a specialized repertoire of mRNAs and, together with other initiation factors, stimulates binding of mRNA and methionyl-tRNAi to the 40S ribosome. The eIF-3 complex specifically targets and initiates translation of a subset of mRNAs involved in cell proliferation. The protein is Eukaryotic translation initiation factor 3 subunit B of Culex quinquefasciatus (Southern house mosquito).